Consider the following 107-residue polypeptide: Large ribosomal subunit protein bL21 (107 aa).

Belongs to the bacterial ribosomal protein bL21 family. As to quaternary structure, part of the 50S ribosomal subunit. Contacts protein L20.

In terms of biological role, this protein binds to 23S rRNA in the presence of protein L20. This Chlamydia trachomatis serovar L2 (strain ATCC VR-902B / DSM 19102 / 434/Bu) protein is Large ribosomal subunit protein bL21.